A 209-amino-acid polypeptide reads, in one-letter code: uncharacterized protein (209 aa).

Over residues 1-15 the composition is skewed to basic and acidic residues; that stretch reads MHRIDTKTAQKDKFG. Positions 1 to 34 are disordered; it reads MHRIDTKTAQKDKFGAGKNGFTRGNPQTGTPATD. The segment covering 22-31 has biased composition (polar residues); it reads TRGNPQTGTP.

This sequence to E.coli YfdL and M.jannaschii MJ0347.

This is an uncharacterized protein from Escherichia coli (strain K12).